The primary structure comprises 439 residues: DNA damage-inducible protein 1 (439 aa).

Residues 1–82 (MQITIAIQDT…LALHVRETQR (82 aa)) form the Ubiquitin-like domain. The disordered stretch occupies residues 82–101 (RATAVPESQQGRPAAPPQQD). Aspartate 220 is an active-site residue. A disordered region spans residues 333 to 398 (QDEPTIEGPG…PAPRAPQARS (66 aa)). Low complexity-rich tracts occupy residues 364 to 375 (GQAGPSTAAQPG) and 383 to 398 (PASA…QARS). The 41-residue stretch at 398-438 (SFPREHIEQLVALGADEQKAIRALEATDGNVEYAASLIFEG) folds into the UBA domain.

Belongs to the DDI1 family. As to quaternary structure, binds ubiquitin and polyubiquitinated proteins.

The protein localises to the cytoplasm. Functionally, probable aspartic protease. May be involved in the regulation of exocytosis. Acts as a linker between the 19S proteasome and polyubiquitinated proteins via UBA domain interactions with ubiquitin for their subsequent degradation. Required for S-phase checkpoint control. This Neurospora crassa (strain ATCC 24698 / 74-OR23-1A / CBS 708.71 / DSM 1257 / FGSC 987) protein is DNA damage-inducible protein 1 (ddi-1).